The chain runs to 400 residues: MIIKPRIRGFICTTTHPVGCEHNVKEQIALTKAQGPIANAPKRVLVVGSSSGYGLSSRITAAFGGGASTIGVFFEKAATEKKTGTAGWYNSAAFDKFAKEEGLYSKSLNGDAFSDEAKQKTIDLIKEDLGQIDMVVYSLASPVRKMPETGEVIRSSLKPIGNTYTATAVDTNKDAIIEASVEPATEQEIQDTITVMGGEDWELWMSALSDAGVLADGCKTVAYSYIGTELTWPIYWDGALGKAKMDLDRAATTLNEKLSATGGTANVAVLKSVVTQASSAIPVMPLYIAMVFKKMREEGVHEGCQEQILRMFSQRLYREDGSAPEVDDQNRLRLDDWELREDIQKHCRELWPQVTTENLKDLTDYVEYKEEFLKLFGFGVDGVDYDVDVNPLVEFDVADI.

NAD(+) is bound by residues 48–53, 74–75, 111–112, and 139–140; these read GSSSGY, FE, DA, and LA. Residue tyrosine 225 coordinates substrate. The active-site Proton donor is the tyrosine 235. NAD(+) contacts are provided by residues lysine 244 and 273 to 275; that span reads VVT.

It belongs to the TER reductase family. Monomer.

It carries out the reaction a 2,3-saturated acyl-[ACP] + NAD(+) = a (2E)-enoyl-[ACP] + NADH + H(+). Its pathway is lipid metabolism; fatty acid biosynthesis. In terms of biological role, involved in the final reduction of the elongation cycle of fatty acid synthesis (FAS II). Catalyzes the reduction of a carbon-carbon double bond in an enoyl moiety that is covalently linked to an acyl carrier protein (ACP). The polypeptide is Enoyl-[acyl-carrier-protein] reductase [NADH] (Aliivibrio salmonicida (strain LFI1238) (Vibrio salmonicida (strain LFI1238))).